The following is a 337-amino-acid chain: Anthranilate phosphoribosyltransferase (337 aa).

5-phospho-alpha-D-ribose 1-diphosphate-binding positions include glycine 80, 83–84 (GD), threonine 88, 90–93 (NIST), 108–116 (KHGNRAVSS), and serine 120. Glycine 80 contributes to the anthranilate binding site. Serine 92 contacts Mg(2+). An anthranilate-binding site is contributed by asparagine 111. Arginine 166 contributes to the anthranilate binding site. Mg(2+) is bound by residues aspartate 224 and glutamate 225.

It belongs to the anthranilate phosphoribosyltransferase family. Homodimer. Mg(2+) is required as a cofactor.

It catalyses the reaction N-(5-phospho-beta-D-ribosyl)anthranilate + diphosphate = 5-phospho-alpha-D-ribose 1-diphosphate + anthranilate. It participates in amino-acid biosynthesis; L-tryptophan biosynthesis; L-tryptophan from chorismate: step 2/5. Its function is as follows. Catalyzes the transfer of the phosphoribosyl group of 5-phosphorylribose-1-pyrophosphate (PRPP) to anthranilate to yield N-(5'-phosphoribosyl)-anthranilate (PRA). The polypeptide is Anthranilate phosphoribosyltransferase (Anaeromyxobacter dehalogenans (strain 2CP-C)).